The following is a 1034-amino-acid chain: DNA polymerase I B, chloroplastic/mitochondrial (1034 aa).

The transit peptide at 1–55 directs the protein to the chloroplast and mitochondrion; the sequence is MGVSLRHLSPSSFWVSRRPRVSSSILSFLVPRRRILCTRKVAIIKGNAGYSTATD. In terms of domain architecture, 3'-5' exonuclease spans 270 to 468; it reads ACDTEVSRID…LYESMKKQLQ (199 aa). The tract at residues 700–1030 is polymerase; that stretch reads HAIAALCEVC…SVDAKCAQNW (331 aa).

Belongs to the DNA polymerase type-A family. As to expression, expressed in shoot apical meristem.

The protein resides in the mitochondrion. The protein localises to the plastid. Its subcellular location is the chloroplast. It carries out the reaction DNA(n) + a 2'-deoxyribonucleoside 5'-triphosphate = DNA(n+1) + diphosphate. Its activity is regulated as follows. Not inhibited by aphidicolin. Functionally, in addition to polymerase activity, this DNA polymerase exhibits 5'-3' exonuclease activity. Required for DNA replication and accumulation in plastids and mitochondria. In Arabidopsis thaliana (Mouse-ear cress), this protein is DNA polymerase I B, chloroplastic/mitochondrial (POLIB).